The following is a 62-amino-acid chain: Large ribosomal subunit protein bL28 (62 aa).

This sequence belongs to the bacterial ribosomal protein bL28 family.

This chain is Large ribosomal subunit protein bL28, found in Ruminiclostridium cellulolyticum (strain ATCC 35319 / DSM 5812 / JCM 6584 / H10) (Clostridium cellulolyticum).